We begin with the raw amino-acid sequence, 470 residues long: Uronate isomerase (470 aa).

This sequence belongs to the metallo-dependent hydrolases superfamily. Uronate isomerase family.

It catalyses the reaction D-glucuronate = D-fructuronate. The catalysed reaction is aldehydo-D-galacturonate = keto-D-tagaturonate. It functions in the pathway carbohydrate metabolism; pentose and glucuronate interconversion. This chain is Uronate isomerase, found in Salmonella agona (strain SL483).